A 65-amino-acid polypeptide reads, in one-letter code: Large ribosomal subunit protein bL35 (65 aa).

The protein belongs to the bacterial ribosomal protein bL35 family.

The chain is Large ribosomal subunit protein bL35 from Phytoplasma mali (strain AT).